The primary structure comprises 223 residues: MEVKIEESWKEMLKSEFCKGYFKRLVSFIKNEYKTKKDKIFPPPRLIFNAFDTLPFKDIKVVILGQDPYHGKGQANGLAFSVNSDIKIPPSLQNIFKEIERSLKIKTIPNGDLTRWAEQGTFLLNSILTVEEGRPSSHKDIGWEIFTNEVIKIISKNLNNVVFMLWGNFAKGKKELIDTSKHLILETSHPSPYSAHNGFLGSNHFSKTLRYLQEHNKTTINFQ.

The active-site Proton acceptor is Asp-67.

This sequence belongs to the uracil-DNA glycosylase (UDG) superfamily. UNG family.

It localises to the cytoplasm. The catalysed reaction is Hydrolyzes single-stranded DNA or mismatched double-stranded DNA and polynucleotides, releasing free uracil.. Its function is as follows. Excises uracil residues from the DNA which can arise as a result of misincorporation of dUMP residues by DNA polymerase or due to deamination of cytosine. The sequence is that of Uracil-DNA glycosylase from Borrelia duttonii (strain Ly).